The sequence spans 520 residues: Cytochrome P450 84A1 (520 aa).

Position 1 is an N-acetylmethionine (Met-1). The helical transmembrane segment at 12–32 (LSDPTTSLVIVVSLFIFISFI) threads the bilayer. Residue Cys-458 coordinates heme.

The protein belongs to the cytochrome P450 family. Heme serves as cofactor.

It is found in the membrane. It participates in aromatic compound metabolism; phenylpropanoid biosynthesis. This Arabidopsis thaliana (Mouse-ear cress) protein is Cytochrome P450 84A1 (CYP84A1).